A 233-amino-acid polypeptide reads, in one-letter code: Large ribosomal subunit protein uL1 (233 aa).

This sequence belongs to the universal ribosomal protein uL1 family. Part of the 50S ribosomal subunit.

In terms of biological role, binds directly to 23S rRNA. The L1 stalk is quite mobile in the ribosome, and is involved in E site tRNA release. Protein L1 is also a translational repressor protein, it controls the translation of the L11 operon by binding to its mRNA. This Laribacter hongkongensis (strain HLHK9) protein is Large ribosomal subunit protein uL1.